The sequence spans 119 residues: Ribonuclease P protein component (119 aa).

Belongs to the RnpA family. As to quaternary structure, consists of a catalytic RNA component (M1 or rnpB) and a protein subunit.

The catalysed reaction is Endonucleolytic cleavage of RNA, removing 5'-extranucleotides from tRNA precursor.. In terms of biological role, RNaseP catalyzes the removal of the 5'-leader sequence from pre-tRNA to produce the mature 5'-terminus. It can also cleave other RNA substrates such as 4.5S RNA. The protein component plays an auxiliary but essential role in vivo by binding to the 5'-leader sequence and broadening the substrate specificity of the ribozyme. This is Ribonuclease P protein component from Proteus mirabilis (strain HI4320).